We begin with the raw amino-acid sequence, 384 residues long: Odorant receptor 46a, isoform B (384 aa).

The Cytoplasmic portion of the chain corresponds to 1–37 (MVTEDFYKYQVWYFQILGVWQLPTWAADHQRRFQSMR). A helical transmembrane segment spans residues 38-58 (FGFILVILFIMLLLFSFEMLN). Asparagine 59 carries an N-linked (GlcNAc...) asparagine glycan. Over 59–65 (NISQVRE) the chain is Extracellular. A helical membrane pass occupies residues 66 to 86 (ILKVFFMFATEISCMAKLLHL). Residues 87–130 (KLKSRKLAGLVDAMLSPEFGVKSEQEMQMLELDRVAVVRMRNSY) are Cytoplasmic-facing. The chain crosses the membrane as a helical span at residues 131 to 151 (GIMSLGAASLILIVPCFDNFG). The Extracellular segment spans residues 152 to 165 (ELPLAMLEVCSIEG). Residues 166-186 (WICYWSQYLFHSICLLPTCVL) traverse the membrane as a helical segment. Residues 187-247 (NITYDSVAYS…YNRIVRFKDL (61 aa)) lie on the Cytoplasmic side of the membrane. Residues 248-268 (VELFIKGPGSVQLMCSVLVLV) traverse the membrane as a helical segment. The Extracellular segment spans residues 269–283 (SNLYDMSTMSIANGD). The chain crosses the membrane as a helical span at residues 284–304 (AIFMLKTCIYQLVMLWQIFII). Topologically, residues 305 to 348 (CYASNEVTVQSSRLCHSIYSSQWTGWNRANRRIVLLMMQRFNSP) are cytoplasmic. A helical membrane pass occupies residues 349–369 (MLLSTFNPTFAFSLEAFGSIV). Asparagine 370 carries an N-linked (GlcNAc...) asparagine glycan. The Extracellular portion of the chain corresponds to 370 to 384 (NCSYSYFALLKRVNS).

This sequence belongs to the insect chemoreceptor superfamily. Heteromeric odorant receptor channel (TC 1.A.69) family. Or2a subfamily. As to quaternary structure, interacts with Orco. Complexes exist early in the endomembrane system in olfactory sensory neurons (OSNs), coupling these complexes to the conserved ciliary trafficking pathway. Isoform B is expressed in the antenna.

It localises to the cell membrane. Odorant receptor which mediates acceptance or avoidance behavior, depending on its substrates. The odorant receptor repertoire encodes a large collection of odor stimuli that vary widely in identity, intensity, and duration. May form a complex with Orco to form odorant-sensing units, providing sensitive and prolonged odorant signaling and calcium permeability. This Drosophila melanogaster (Fruit fly) protein is Odorant receptor 46a, isoform B (Or46a).